A 173-amino-acid chain; its full sequence is Crossover junction endodeoxyribonuclease RuvC (173 aa).

Residues aspartate 8, glutamate 67, and aspartate 139 contribute to the active site. Positions 8, 67, and 139 each coordinate Mg(2+).

This sequence belongs to the RuvC family. Homodimer which binds Holliday junction (HJ) DNA. The HJ becomes 2-fold symmetrical on binding to RuvC with unstacked arms; it has a different conformation from HJ DNA in complex with RuvA. In the full resolvosome a probable DNA-RuvA(4)-RuvB(12)-RuvC(2) complex forms which resolves the HJ. Requires Mg(2+) as cofactor.

It is found in the cytoplasm. It catalyses the reaction Endonucleolytic cleavage at a junction such as a reciprocal single-stranded crossover between two homologous DNA duplexes (Holliday junction).. Its function is as follows. The RuvA-RuvB-RuvC complex processes Holliday junction (HJ) DNA during genetic recombination and DNA repair. Endonuclease that resolves HJ intermediates. Cleaves cruciform DNA by making single-stranded nicks across the HJ at symmetrical positions within the homologous arms, yielding a 5'-phosphate and a 3'-hydroxyl group; requires a central core of homology in the junction. The consensus cleavage sequence is 5'-(A/T)TT(C/G)-3'. Cleavage occurs on the 3'-side of the TT dinucleotide at the point of strand exchange. HJ branch migration catalyzed by RuvA-RuvB allows RuvC to scan DNA until it finds its consensus sequence, where it cleaves and resolves the cruciform DNA. The protein is Crossover junction endodeoxyribonuclease RuvC of Vibrio atlanticus (strain LGP32) (Vibrio splendidus (strain Mel32)).